The primary structure comprises 799 residues: DNA ligase (799 aa).

A compositionally biased stretch (basic and acidic residues) spans 1 to 11; sequence MTEVKTGRVVD. The disordered stretch occupies residues 1 to 35; sequence MTEVKTGRVVDDAPVNDAPENNAAEATSPARHDAI. Residues 67–71, 116–117, and Asp147 each bind NAD(+); these read DAEYD and SL. Lys149 acts as the N6-AMP-lysine intermediate in catalysis. NAD(+)-binding residues include Arg170, Glu207, Lys327, and Lys351. Zn(2+)-binding residues include Cys445, Cys448, Cys463, and Cys468. The BRCT domain maps to 634–723; it reads AIVLPLQGLK…VASVDASEAV (90 aa). A disordered region spans residues 720-799; the sequence is SEAVAEETPP…RGRAEQLKLF (80 aa). Residues 755 to 767 are compositionally biased toward low complexity; that stretch reads GSASGDDSRGAAA. Positions 787-799 are enriched in basic and acidic residues; the sequence is DVPRGRAEQLKLF.

The protein belongs to the NAD-dependent DNA ligase family. LigA subfamily. Mg(2+) serves as cofactor. It depends on Mn(2+) as a cofactor.

It carries out the reaction NAD(+) + (deoxyribonucleotide)n-3'-hydroxyl + 5'-phospho-(deoxyribonucleotide)m = (deoxyribonucleotide)n+m + AMP + beta-nicotinamide D-nucleotide.. DNA ligase that catalyzes the formation of phosphodiester linkages between 5'-phosphoryl and 3'-hydroxyl groups in double-stranded DNA using NAD as a coenzyme and as the energy source for the reaction. It is essential for DNA replication and repair of damaged DNA. The protein is DNA ligase of Nitratidesulfovibrio vulgaris (strain ATCC 29579 / DSM 644 / CCUG 34227 / NCIMB 8303 / VKM B-1760 / Hildenborough) (Desulfovibrio vulgaris).